A 687-amino-acid polypeptide reads, in one-letter code: TWiK family of potassium channels protein 12 (687 aa).

Residues 1-21 are Cytoplasmic-facing; that stretch reads MTLFQKLQWFCQLIRLRAYYK. The helical transmembrane segment at 22–42 threads the bilayer; it reads FLLLIAYTLFGAWLFRFYELQ. N-linked (GlcNAc...) asparagine glycosylation is found at Asn53, Asn77, and Asn98. An intramembrane region (pore-forming) is located at residues 112–132; it reads WTWTGAMFYAGQLYTTIGYGY. The chain crosses the membrane as a helical span at residues 142–162; the sequence is ICTVLYALFGIPCFLMYLKAI. Residues 163-212 lie on the Cytoplasmic side of the membrane; the sequence is GKTLSKRLKKIYKRVRRSAFGKFLLPTRVTATKDGFEDPDASAEERKRKP. A helical membrane pass occupies residues 213-233; the sequence is FPIPIAIILLIIWICFSASMF. The segment at residues 242–262 is an intramembrane region (pore-forming); sequence FPSAVYFFIVSISTVGLGDML. Residues 270–290 form a helical membrane-spanning segment; the sequence is VFNFLLILFGLALLSMCFELI. The Cytoplasmic portion of the chain corresponds to 291–687; it reads TDRIAKWKQK…SKRDAPVNIV (397 aa). The disordered stretch occupies residues 661–687; that stretch reads SPSTSTSTSMIDSGYDLSKRDAPVNIV. Over residues 677 to 687 the composition is skewed to basic and acidic residues; sequence LSKRDAPVNIV.

It belongs to the two pore domain potassium channel (TC 1.A.1.8) family.

Its subcellular location is the membrane. This is TWiK family of potassium channels protein 12 from Caenorhabditis briggsae.